The following is a 1220-amino-acid chain: DNA polymerase catalytic subunit (1220 aa).

Disordered regions lie at residues 21-43 (GKRPFFRPGSGQTAETERPRPPQ) and 641-691 (QADA…KPGV). Positions 646-660 (SETSELAMDSQSHAF) are enriched in polar residues.

Belongs to the DNA polymerase type-B family. In terms of assembly, forms a complex with the ssDNA-binding protein, the DNA polymerase processivity factor, and the alkaline exonuclease. Interacts with the helicase-primase complex composed of the primase, the helicase and the primase-associated factor; this interaction may coordinate leading and lagging strand DNA synthesis at the replication fork.

It localises to the host nucleus. The enzyme catalyses DNA(n) + a 2'-deoxyribonucleoside 5'-triphosphate = DNA(n+1) + diphosphate. It catalyses the reaction Endonucleolytic cleavage to 5'-phosphomonoester.. Functionally, replicates viral genomic DNA. The replication complex is composed of six viral proteins: the DNA polymerase, processivity factor, primase, primase-associated factor, helicase, and ssDNA-binding protein. Additionally, the polymerase contains an intrinsic ribonuclease H (RNase H) activity that specifically degrades RNA/DNA heteroduplexes or duplex DNA substrates in the 5' to 3' direction. Therefore, it can catalyze the excision of the RNA primers that initiate the synthesis of Okazaki fragments at a replication fork during viral DNA replication. This is DNA polymerase catalytic subunit from Equine herpesvirus 1 (strain Ab4p) (EHV-1).